Here is a 1203-residue protein sequence, read N- to C-terminus: Rho GTPase-activating protein gacGG (1203 aa).

7 RCC1 repeats span residues 52 to 104 (TGEL…AIME), 106 to 148 (GLLY…VVAD), 155 to 204 (KRSV…AIVE), 206 to 255 (NEVF…ARSG), 257 to 298 (GNVC…VLSE), 299 to 359 (KGEI…EGRN), and 361 to 410 (LSVY…YLRG). Positions 316–343 (KLDVNSSPNINSSSGTTTPTTNTTTTTK) are disordered. Low complexity predominate over residues 320 to 343 (NSSPNINSSSGTTTPTTNTTTTTK). Residues 381 to 594 (VDIAESMRRK…TIMKQYPLME (214 aa)) form the Rho-GAP domain. A coiled-coil region spans residues 649 to 679 (TLEIKNNQNNQNNQKENNNNNNNINNSNNNN). 3 disordered regions span residues 657–725 (NNQN…TGNI), 746–789 (KDGN…NLSP), and 831–852 (FANS…LIGS). Low complexity-rich tracts occupy residues 746-788 (KDGN…PNLS) and 833-852 (NSGS…LIGS). The stretch at 995 to 1078 (FDLLEKSMTE…ISNQNLSRVN (84 aa)) forms a coiled coil.

The protein localises to the cytoplasm. Rho GTPase-activating protein involved in the signal transduction pathway. The chain is Rho GTPase-activating protein gacGG (gacGG) from Dictyostelium discoideum (Social amoeba).